The primary structure comprises 331 residues: FMRFamide-related neuropeptides (331 aa).

The first 25 residues, 1–25 (MRCWSPCSLLVVIVIYCLSSHTSEA), serve as a signal peptide directing secretion. Positions 26 to 65 (FDLAQACVESQRLSLLPICDTIFAVQQEGVQQSADDGMRS) are excised as a propeptide. Residues Phe-71 and Phe-83 each carry the phenylalanine amide modification. The propeptide occupies 86–94 (NVPDLPFED). At Phe-100 the chain carries Phenylalanine amide. Residues 103–168 (AAPQLDELLK…YIDDVEDSDV (66 aa)) constitute a propeptide that is removed on maturation. The segment at 122 to 158 (QKADETSVRRKRSTDAAPQNNAENPEQKNDSAKITKR) is disordered. The segment covering 146–158 (PEQKNDSAKITKR) has biased composition (basic and acidic residues). 2 positions are modified to phenylalanine amide: Phe-174 and Phe-181. Positions 184–194 (NPSDVGNKLTE) are excised as a propeptide. Phe-200 bears the Phenylalanine amide mark. The propeptide occupies 203-205 (DPE). A Phenylalanine amide modification is found at Phe-211. Residues 214–216 (SDD) constitute a propeptide that is removed on maturation. Phe-222 carries the phenylalanine amide modification. Positions 225–236 (NPSDAEDELEED) are excised as a propeptide. The residue at position 242 (Phe-242) is a Phenylalanine amide. A propeptide spanning residues 245-254 (GGEDDEEEAE) is cleaved from the precursor. A Phenylalanine amide modification is found at Phe-260. Positions 263-265 (DPE) are excised as a propeptide. Phe-271 carries the post-translational modification Phenylalanine amide. The propeptide occupies 274–277 (SGED). Over residues 279 to 296 (RFMRFGRNPDEQEADKRF) the composition is skewed to basic and acidic residues. Residues 279 to 310 (RFMRFGRNPDEQEADKRFMRFGRGGEDDEVST) form a disordered region. Phe-283 is subject to Phenylalanine amide. A propeptide spanning residues 286–293 (NPDEQEAD) is cleaved from the precursor. Phenylalanine amide is present on Phe-299. The propeptide occupies 302–312 (GGEDDEVSTED). Phe-318 is modified (phenylalanine amide). A propeptide spanning residues 321 to 331 (SADKCKGCLEG) is cleaved from the precursor.

The protein belongs to the FARP (FMRFamide related peptide) family.

It is found in the secreted. Excitatory neurotransmitters that directly modulate chromatophore function by activating chromatophore expansion at the chromatophore neuromuscular junction. The polypeptide is FMRFamide-related neuropeptides (Doryteuthis opalescens (California market squid)).